The primary structure comprises 1181 residues: Cellulose synthase-like protein D5 (1181 aa).

The segment covering 1-17 (MVKSAASQSPSPVTITV) has biased composition (polar residues). 2 disordered regions span residues 1 to 70 (MVKS…DEGR) and 202 to 229 (KEPYRDINDDPETEEEDEEDEAKPLPQM). Low complexity predominate over residues 48 to 59 (SSRATRRTSISS). Over residues 210-222 (DDPETEEEDEEDE) the composition is skewed to acidic residues. The next 2 membrane-spanning stretches (helical) occupy residues 312-332 (AIISPYRLLIALRLVALGLFL) and 343-363 (AMWLWGMSTTCELWFALSWLL). Residue D443 is part of the active site. Residues 497–542 (VRERRRVKREYDEFKVRINSLPEAIRRRSDAYNVHEELRAKKKQME) adopt a coiled-coil conformation. D884 is an active-site residue. Transmembrane regions (helical) follow at residues 966–986 (LFLIVYCILPAISLFSGQFIV), 991–1011 (ITFLIYLLSITLTLCMLSLLE), 1038–1058 (PAAVLQGLLKVIAGVDISFTL), 1082–1102 (FLMVPPLTIMMVNMIAIAVGL), 1116–1136 (LVGGVFFSFWVLCHLYPFAKG), and 1146–1166 (TIVFVWSGLLSIIVSLLWVYI).

This sequence belongs to the glycosyltransferase 2 family. Plant cellulose synthase-like D subfamily. In terms of tissue distribution, expressed in vascular tissues.

It localises to the golgi apparatus membrane. In terms of biological role, involved in stem and root growth. Possesses xylan and homogalacturonan synthase activity. The chain is Cellulose synthase-like protein D5 (CSLD5) from Arabidopsis thaliana (Mouse-ear cress).